Consider the following 122-residue polypeptide: MKKVNKKTVGSVGEKIAAQYLSKKGYKILEKNFKCKIGEIDLIALYKNQIVFVEVKTRTSVNFGLPSEAVDFHKQQKIVKIAQVYIASSNFKQYQPRFDIIEVYLNPEKLTLEKVNHILNAF.

It belongs to the UPF0102 family.

The chain is UPF0102 protein TTE1452 from Caldanaerobacter subterraneus subsp. tengcongensis (strain DSM 15242 / JCM 11007 / NBRC 100824 / MB4) (Thermoanaerobacter tengcongensis).